A 214-amino-acid chain; its full sequence is Small ribosomal subunit protein eS1 (214 aa).

Belongs to the eukaryotic ribosomal protein eS1 family.

This Aeropyrum pernix (strain ATCC 700893 / DSM 11879 / JCM 9820 / NBRC 100138 / K1) protein is Small ribosomal subunit protein eS1.